The sequence spans 292 residues: Pyridoxal 5'-phosphate synthase subunit PdxS (292 aa).

Aspartate 22 provides a ligand contact to D-ribose 5-phosphate. Lysine 79 functions as the Schiff-base intermediate with D-ribose 5-phosphate in the catalytic mechanism. Residue glycine 151 participates in D-ribose 5-phosphate binding. Arginine 163 contacts D-glyceraldehyde 3-phosphate. D-ribose 5-phosphate contacts are provided by residues glycine 212 and 233 to 234 (GS).

Belongs to the PdxS/SNZ family. As to quaternary structure, in the presence of PdxT, forms a dodecamer of heterodimers.

The catalysed reaction is aldehydo-D-ribose 5-phosphate + D-glyceraldehyde 3-phosphate + L-glutamine = pyridoxal 5'-phosphate + L-glutamate + phosphate + 3 H2O + H(+). The protein operates within cofactor biosynthesis; pyridoxal 5'-phosphate biosynthesis. Its function is as follows. Catalyzes the formation of pyridoxal 5'-phosphate from ribose 5-phosphate (RBP), glyceraldehyde 3-phosphate (G3P) and ammonia. The ammonia is provided by the PdxT subunit. Can also use ribulose 5-phosphate and dihydroxyacetone phosphate as substrates, resulting from enzyme-catalyzed isomerization of RBP and G3P, respectively. The sequence is that of Pyridoxal 5'-phosphate synthase subunit PdxS from Ruminiclostridium cellulolyticum (strain ATCC 35319 / DSM 5812 / JCM 6584 / H10) (Clostridium cellulolyticum).